Here is a 166-residue protein sequence, read N- to C-terminus: Large ribosomal subunit protein bL19 (166 aa).

It belongs to the bacterial ribosomal protein bL19 family.

Functionally, this protein is located at the 30S-50S ribosomal subunit interface and may play a role in the structure and function of the aminoacyl-tRNA binding site. In Chelativorans sp. (strain BNC1), this protein is Large ribosomal subunit protein bL19.